A 413-amino-acid polypeptide reads, in one-letter code: MTWKPKMLILSHDLISPEKYIMGEDDIVELLGKSSQVVTSSQTQTPSCDPPLILRGSGSGDGEGNGPLPQPPPPLYHQQSLFIQEDEMASWLHQPNRQDYLYSQLLYSGVASTHPQSLASLEPPPPPRAQYILAADRPTGHILAERRAENFMNISRQRGNIFLGGVEAVPSNSTLLSSATESIPATHGTESRATVTGGVSRTFAVPGLGPRGKAVAIETAGTQSWGLCKAETEPVQRQPATETDITDERKRKTREETNVENQGTEEARDSTSSKRSRAAIMHKLSERRRRQKINEMMKALQELLPRCTKTDRSSMLDDVIEYVKSLQSQIQMFSMGHVMIPPMMYAGNIQQQYMPHMAMGMNRPPAFIPFPRQAHMAEGVGPVDLFRENEETEQETMSLLLREDKRTKQKMFS.

Positions 40–75 are disordered; it reads SSQTQTPSCDPPLILRGSGSGDGEGNGPLPQPPPPL. Thr-186 bears the Phosphothreonine mark. Phosphoserine is present on Ser-191. 2 disordered regions span residues 232–278 and 391–413; these read TEPV…RSRA and ETEQETMSLLLREDKRTKQKMFS. The segment covering 246-257 has biased composition (basic and acidic residues); the sequence is TDERKRKTREET. Residues 277–326 enclose the bHLH domain; it reads RAAIMHKLSERRRRQKINEMMKALQELLPRCTKTDRSSMLDDVIEYVKSL.

As to quaternary structure, homodimer. As to expression, expressed constitutively in leaves, stems, and flowers.

Its subcellular location is the nucleus. This Arabidopsis thaliana (Mouse-ear cress) protein is Transcription factor bHLH23 (BHLH23).